Consider the following 315-residue polypeptide: p-hydroxyphenylacetate 3-hydroxylase, reductase component (315 aa).

This sequence belongs to the non-flavoprotein flavin reductase family. As to quaternary structure, homodimer. The p-hydroxyphenylacetate 3-hydroxylase (HpaH) is composed of an oxygenase component C2 and a reductase component C1.

The catalysed reaction is a reduced flavin + NAD(+) = an oxidized flavin + NADH + 2 H(+). It participates in aromatic compound metabolism; 4-hydroxyphenylacetate degradation; pyruvate and succinate semialdehyde from 4-hydroxyphenylacetate: step 1/7. Its activity is regulated as follows. Flavin concentrations greater than 15 uM do not inhibit the NADH oxidation activity of the reductase component C1 but do affect the hydroxylation activity of the C1-C2 complex. Maximal reductase activity is achieved only upon HPA binding to the reductase component C1 before interaction with NADH. HPA stimulates the rates of both the reduction of FMN and release of reduced FMN from the reductase component. In terms of biological role, reductase component of a two-component system that supplies reduced FMN (FMNH2) to the oxygenase component to catalyze the hydroxylation of 4-hydroxyphenylacetic acid, leading to the production of 3,4-dihydroxyphenylacetate (3,4-DHPA). Catalyzes the reduction of free flavins (FMN, FAD and riboflavin) by NADH. Subsequently, the reduced flavins diffuse to the oxygenase component C2. This is p-hydroxyphenylacetate 3-hydroxylase, reductase component from Acinetobacter baumannii.